Here is a 367-residue protein sequence, read N- to C-terminus: Ribosome-binding ATPase YchF (367 aa).

Residues 2–258 form the OBG-type G domain; it reads LSAGIVGLPN…LKLEQRQYFL (257 aa). 11-16 is an ATP binding site; it reads NVGKST. Ser-15 and Thr-35 together coordinate Mg(2+). The TGS domain occupies 281–364; that stretch reads NLWSFFTFGK…KDGDVCNFKF (84 aa).

It belongs to the TRAFAC class OBG-HflX-like GTPase superfamily. OBG GTPase family. YchF/OLA1 subfamily. The cofactor is Mg(2+).

Its function is as follows. ATPase that binds to both the 70S ribosome and the 50S ribosomal subunit in a nucleotide-independent manner. The sequence is that of Ribosome-binding ATPase YchF from Mycoplasma genitalium (strain ATCC 33530 / DSM 19775 / NCTC 10195 / G37) (Mycoplasmoides genitalium).